The chain runs to 190 residues: Ras-related protein RabF1 (190 aa).

GTP is bound at residue 15–22 (GDSGVGKT). An Effector region motif is present at residues 37–44 (HITIGIEF). GTP is bound by residues 62–66 (DTAGE) and 119–122 (NKND). Cysteine 187 is subject to Cysteine methyl ester. Residue cysteine 187 is the site of S-geranylgeranyl cysteine attachment. Positions 188–190 (IIN) are cleaved as a propeptide — removed in mature form.

This sequence belongs to the small GTPase superfamily. Rab family.

It localises to the cell membrane. This is Ras-related protein RabF1 (rabF1-1) from Dictyostelium discoideum (Social amoeba).